The following is a 308-amino-acid chain: ATP synthase gamma chain (308 aa).

This sequence belongs to the ATPase gamma chain family. As to quaternary structure, F-type ATPases have 2 components, CF(1) - the catalytic core - and CF(0) - the membrane proton channel. CF(1) has five subunits: alpha(3), beta(3), gamma(1), delta(1), epsilon(1). CF(0) has three main subunits: a, b and c.

The protein localises to the cell membrane. Its function is as follows. Produces ATP from ADP in the presence of a proton gradient across the membrane. The gamma chain is believed to be important in regulating ATPase activity and the flow of protons through the CF(0) complex. The chain is ATP synthase gamma chain from Mycobacteroides abscessus (strain ATCC 19977 / DSM 44196 / CCUG 20993 / CIP 104536 / JCM 13569 / NCTC 13031 / TMC 1543 / L948) (Mycobacterium abscessus).